Consider the following 329-residue polypeptide: UPF0158 protein CT_429 (329 aa).

A disordered region spans residues G292 to S329. Residues S295–E313 are compositionally biased toward acidic residues. The span at K317–S329 shows a compositional bias: basic residues.

It belongs to the UPF0158 family.

The protein is UPF0158 protein CT_429 of Chlamydia trachomatis serovar D (strain ATCC VR-885 / DSM 19411 / UW-3/Cx).